Reading from the N-terminus, the 182-residue chain is Large ribosomal subunit protein uL5 (182 aa).

The protein belongs to the universal ribosomal protein uL5 family. In terms of assembly, part of the 50S ribosomal subunit; part of the 5S rRNA/L5/L18/L25 subcomplex. Contacts the 5S rRNA and the P site tRNA. Forms a bridge to the 30S subunit in the 70S ribosome.

In terms of biological role, this is one of the proteins that bind and probably mediate the attachment of the 5S RNA into the large ribosomal subunit, where it forms part of the central protuberance. In the 70S ribosome it contacts protein S13 of the 30S subunit (bridge B1b), connecting the 2 subunits; this bridge is implicated in subunit movement. Contacts the P site tRNA; the 5S rRNA and some of its associated proteins might help stabilize positioning of ribosome-bound tRNAs. In Thermosipho melanesiensis (strain DSM 12029 / CIP 104789 / BI429), this protein is Large ribosomal subunit protein uL5.